Here is a 336-residue protein sequence, read N- to C-terminus: Small ribosomal subunit protein RACK1y (336 aa).

WD repeat units follow at residues 15–55 (GHND…TAVA), 74–113 (GHSHFVQDVVLSSDGQFALSGSWDGELRLWDLATGRTTRR), 116–155 (GHTKDVLSVAFSVDNRQIVSAARDNTIKLWNTLGECKYTI), 164–205 (GHTG…LRTK), 208–247 (GHNGYVNAVAVSPDGSLCASGGKDGTTLLWDLTEGKMLYK), 249–287 (DAGAIIHSLCFSPNRYWLCAATEDSVKIWDLESKLVMQD), and 297–336 (SQMLYCTSLSWSADGSTLFAGYTDGTIRVWKVSGFGGYAI).

The protein belongs to the WD repeat G protein beta family. Ribosomal protein RACK1 subfamily. As to quaternary structure, homodimer and heterodimer with RACK1A.

Component of the RACK1 regulatory proteins that play a role in multiple signal transduction pathways. The polypeptide is Small ribosomal subunit protein RACK1y (RACK1B) (Oryza sativa subsp. japonica (Rice)).